The chain runs to 393 residues: Prokineticin receptor 1 (393 aa).

Residues 1–62 are Extracellular-facing; that stretch reads METTVGTLGE…TNSRTFFAAK (62 aa). A glycan (N-linked (GlcNAc...) asparagine) is linked at Asn-11. A helical transmembrane segment spans residues 63–83; that stretch reads IVIGMALVGIMLVCGIGNFIF. At 84 to 98 the chain is on the cytoplasmic side; the sequence is ITALARYKKLRNLTN. Residues 99–119 form a helical membrane-spanning segment; that stretch reads LLIANLAISDFLVAIVCCPFE. Over 120–145 the chain is Extracellular; that stretch reads MDYYVVRQLSWEHGHVLCASVNYLRT. Cysteines 137 and 217 form a disulfide. Residues 146–166 form a helical membrane-spanning segment; the sequence is VSLYVSTNALLAIAIDRYLAI. The Cytoplasmic portion of the chain corresponds to 167–179; the sequence is VHPLRPRMKCQTA. Residues 180–200 traverse the membrane as a helical segment; it reads AGLIFLVWSVSILIAIPAAYF. Residues 201-232 lie on the Extracellular side of the membrane; it reads TTETVLVIVESQEKIFCGQIWPVDQQFYYRSY. A helical transmembrane segment spans residues 233-253; the sequence is FLLVFGLEFVGPVIAMTLCYA. The Cytoplasmic portion of the chain corresponds to 254-282; that stretch reads RVSRELWFKAVPGFQTEQIRRRLRCRRRT. A helical transmembrane segment spans residues 283 to 303; the sequence is VLGLVCVLSAYVLCWAPFYGF. The Extracellular segment spans residues 304-322; the sequence is TIVRDFFPSVFVKEKHYLT. A helical transmembrane segment spans residues 323 to 343; the sequence is AFYVVECIAMSNSMINTLCFV. At 344-393 the chain is on the cytoplasmic side; sequence TVRNNTSKYLKRILRLQWRASPSGSKASADLDLRTTGIPATEEVDCIRLK.

The protein belongs to the G-protein coupled receptor 1 family. In terms of tissue distribution, widely expressed in peripheral tissues with the highest level in the spleen and moderate levels in the adipose tissues, thymus, lung, kidney, testis, uterus and small intestine.

Its subcellular location is the cell membrane. Receptor for prokineticin 1. Exclusively coupled to the G(q) subclass of heteromeric G proteins. Activation leads to mobilization of calcium, stimulation of phosphoinositide turnover and activation of p44/p42 mitogen-activated protein kinase. May play a role during early pregnancy. The chain is Prokineticin receptor 1 (Prokr1) from Rattus norvegicus (Rat).